We begin with the raw amino-acid sequence, 388 residues long: Succinate--CoA ligase [ADP-forming] subunit beta (388 aa).

The 236-residue stretch at 9–244 (KQLFAEYGLP…PSQDDPREAH (236 aa)) folds into the ATP-grasp domain. ATP-binding positions include K46, 53–55 (GRG), E99, T102, and E107. Positions 199 and 213 each coordinate Mg(2+). Residues N264 and 321-323 (GIV) contribute to the substrate site.

It belongs to the succinate/malate CoA ligase beta subunit family. In terms of assembly, heterotetramer of two alpha and two beta subunits. Mg(2+) serves as cofactor.

It catalyses the reaction succinate + ATP + CoA = succinyl-CoA + ADP + phosphate. The catalysed reaction is GTP + succinate + CoA = succinyl-CoA + GDP + phosphate. Its pathway is carbohydrate metabolism; tricarboxylic acid cycle; succinate from succinyl-CoA (ligase route): step 1/1. Functionally, succinyl-CoA synthetase functions in the citric acid cycle (TCA), coupling the hydrolysis of succinyl-CoA to the synthesis of either ATP or GTP and thus represents the only step of substrate-level phosphorylation in the TCA. The beta subunit provides nucleotide specificity of the enzyme and binds the substrate succinate, while the binding sites for coenzyme A and phosphate are found in the alpha subunit. The sequence is that of Succinate--CoA ligase [ADP-forming] subunit beta from Pseudomonas fluorescens (strain SBW25).